A 146-amino-acid polypeptide reads, in one-letter code: Hemoglobin subunit beta (146 aa).

N-acetylvaline is present on V1. Residues 2–146 form the Globin domain; the sequence is DLTAEEKAAV…VANALAHKYH (145 aa). Position 44 is a phosphoserine (S44). Position 59 is an N6-acetyllysine (K59). H63 provides a ligand contact to heme b. An N6-acetyllysine modification is found at K82. Residue H92 participates in heme b binding. S-nitrosocysteine is present on C93. K144 is subject to N6-acetyllysine.

This sequence belongs to the globin family. As to quaternary structure, heterotetramer of two alpha chains and two beta chains. Red blood cells.

In terms of biological role, involved in oxygen transport from the lung to the various peripheral tissues. This chain is Hemoglobin subunit beta (HBB), found in Rhinoceros unicornis (Greater Indian rhinoceros).